Here is a 456-residue protein sequence, read N- to C-terminus: N(6)-adenosine-methyltransferase non-catalytic subunit METTL14 (456 aa).

A compositionally biased stretch (basic and acidic residues) spans 39 to 51; it reads DEQREIAETRETS. The segment at 39 to 74 is disordered; that stretch reads DEQREIAETRETSRASYDTSATVSKRKMPEEGEADE. The segment covering 52–61 has biased composition (polar residues); that stretch reads RASYDTSATV. 2 interaction with METTL3 regions span residues 135 to 136 and 237 to 238; these read RD and SG. Residues 245 to 254 are positively charged region required for RNA-binding; sequence RMCLRKWGFR. 2 interaction with METTL3 regions span residues 255–258 and 278–287; these read RSED and KAIFQRTKEH. The tract at residues 297-298 is positively charged region required for RNA-binding; sequence HR. Residues 308–312 form an interaction with METTL3 region; it reads NVDID. The tract at residues 395–456 is disordered; that stretch reads LRPKTPPPKS…GPHRGVFAPR (62 aa). Over residues 410-421 the composition is skewed to gly residues; sequence ASRGGGRGGPSA. A compositionally biased stretch (basic and acidic residues) spans 423-441; that stretch reads RGERGRERNRGSFRGDRGN.

This sequence belongs to the MT-A70-like family. As to quaternary structure, heterodimer; heterodimerizes with mettl3 to form an antiparallel heterodimer that constitutes an active methyltransferase. Component of the WMM complex, a N6-methyltransferase complex composed of a catalytic subcomplex, named MAC, and of an associated subcomplex, named MACOM. The MAC subcomplex is composed of mettl3 and mettl14.

It localises to the nucleus. Functionally, the METTL3-METTL14 heterodimer forms a N6-methyltransferase complex that methylates adenosine residues at the N(6) position of some mRNAs and regulates the circadian clock, differentiation of embryonic stem cells and cortical neurogenesis. In the heterodimer formed with mettl3, mettl14 constitutes the RNA-binding scaffold that recognizes the substrate rather than the catalytic core. N6-methyladenosine (m6A), which takes place at the 5'-[AG]GAC-3' consensus sites of some mRNAs, plays a role in mRNA stability and processing. The sequence is that of N(6)-adenosine-methyltransferase non-catalytic subunit METTL14 (mettl14) from Xenopus tropicalis (Western clawed frog).